We begin with the raw amino-acid sequence, 214 residues long: Probable GTP-binding protein EngB (214 aa).

One can recognise an EngB-type G domain in the interval 24-199 (GGYEVAFAGR…RGIVGGWLGL (176 aa)). GTP-binding positions include 32 to 39 (GRSNAGKS), 59 to 63 (GRTQQ), 77 to 80 (DLPG), 144 to 147 (TKAD), and 178 to 180 (YSG). The Mg(2+) site is built by S39 and T61.

This sequence belongs to the TRAFAC class TrmE-Era-EngA-EngB-Septin-like GTPase superfamily. EngB GTPase family. It depends on Mg(2+) as a cofactor.

In terms of biological role, necessary for normal cell division and for the maintenance of normal septation. This is Probable GTP-binding protein EngB from Xanthomonas axonopodis pv. citri (strain 306).